The following is a 270-amino-acid chain: NAD(P)H-hydrate epimerase (270 aa).

Residues 25–234 (FQQLMDLMQN…DLLAPEAIYQ (210 aa)) enclose the YjeF N-terminal domain. Residue 73–77 (DNGGQ) participates in (6S)-NADPHX binding. The K(+) site is built by N74 and D144. Residues 148–154 (GVGLYGH) and E177 each bind (6S)-NADPHX. T180 contacts K(+).

This sequence belongs to the NnrE/AIBP family. K(+) serves as cofactor.

The catalysed reaction is (6R)-NADHX = (6S)-NADHX. It catalyses the reaction (6R)-NADPHX = (6S)-NADPHX. Its function is as follows. Catalyzes the epimerization of the S- and R-forms of NAD(P)HX, a damaged form of NAD(P)H that is a result of enzymatic or heat-dependent hydration. This is a prerequisite for the S-specific NAD(P)H-hydrate dehydratase to allow the repair of both epimers of NAD(P)HX. This is NAD(P)H-hydrate epimerase from Legionella pneumophila serogroup 1 (strain 2300/99 Alcoy).